The following is a 132-amino-acid chain: Small ribosomal subunit protein uS8 (132 aa).

Belongs to the universal ribosomal protein uS8 family. As to quaternary structure, part of the 30S ribosomal subunit. Contacts proteins S5 and S12.

Functionally, one of the primary rRNA binding proteins, it binds directly to 16S rRNA central domain where it helps coordinate assembly of the platform of the 30S subunit. This is Small ribosomal subunit protein uS8 from Ehrlichia ruminantium (strain Welgevonden).